The sequence spans 164 residues: Lipoprotein signal peptidase (164 aa).

Helical transmembrane passes span 6–26, 39–59, 65–85, and 88–108; these read LGVLAGIVALVLDQVTKLWLL, VLPFFDLVLAWNTGISYGWFS, GQILMLAFKAVAIVALAIWMA, and TTKLATIGLGLIIGGAIGNAI. Residues D118 and D140 contribute to the active site. Residues 141-161 form a helical membrane-spanning segment; the sequence is VAIVVGVAALLYDSLIGLPAA.

Belongs to the peptidase A8 family.

It localises to the cell inner membrane. The catalysed reaction is Release of signal peptides from bacterial membrane prolipoproteins. Hydrolyzes -Xaa-Yaa-Zaa-|-(S,diacylglyceryl)Cys-, in which Xaa is hydrophobic (preferably Leu), and Yaa (Ala or Ser) and Zaa (Gly or Ala) have small, neutral side chains.. Its pathway is protein modification; lipoprotein biosynthesis (signal peptide cleavage). This protein specifically catalyzes the removal of signal peptides from prolipoproteins. This Rhodopseudomonas palustris (strain ATCC BAA-98 / CGA009) protein is Lipoprotein signal peptidase.